The chain runs to 131 residues: Interleukin-13 (131 aa).

An N-terminal signal peptide occupies residues 1–18 (MALWVTAVLALACLGGLA). Asn42, Asn53, Asn76, and Asn121 each carry an N-linked (GlcNAc...) asparagine glycan. 2 cysteine pairs are disulfide-bonded: Cys52/Cys80 and Cys68/Cys94.

It belongs to the IL-4/IL-13 family. In terms of assembly, interacts with IL13RA2.

The protein localises to the secreted. In terms of biological role, cytokine that plays important roles in allergic inflammation and immune response to parasite infection. Synergizes with IL2 in regulating interferon-gamma synthesis. Stimulates B-cell proliferation, and activation of eosinophils, basophils, and mast cells. Plays an important role in controlling IL33 activity by modulating the production of transmembrane and soluble forms of interleukin-1 receptor-like 1/IL1RL1. Displays the capacity to antagonize Th1-driven proinflammatory immune response and downregulates synthesis of many proinflammatory cytokines including IL1, IL6, IL10, IL12 and TNF-alpha through a mechanism that partially involves suppression of NF-kappa-B. Also functions on nonhematopoietic cells, including endothelial cells where it induces vascular cell adhesion protein 1/VCAM1, which is important in the recruitment of eosinophils. Exerts its biological effects through its receptors which comprises the IL4R chain and the IL13RA1 chain, to activate JAK1 and TYK2, leading to the activation of STAT6. Aside from IL13RA1, another receptor IL13RA2 acts as a high affinity decoy for IL13 and mediates internalization and depletion of extracellular IL13. The chain is Interleukin-13 (Il13) from Rattus norvegicus (Rat).